The primary structure comprises 353 residues: Ferrochelatase (353 aa).

Basic and acidic residues predominate over residues Met1–Ala13. Positions Met1–Ser23 are disordered. Residues His223 and Glu304 each contribute to the Fe cation site.

This sequence belongs to the ferrochelatase family.

It is found in the cytoplasm. The enzyme catalyses heme b + 2 H(+) = protoporphyrin IX + Fe(2+). Its pathway is porphyrin-containing compound metabolism; protoheme biosynthesis; protoheme from protoporphyrin-IX: step 1/1. Functionally, catalyzes the ferrous insertion into protoporphyrin IX. This is Ferrochelatase from Chelativorans sp. (strain BNC1).